We begin with the raw amino-acid sequence, 304 residues long: Tritrans,polycis-undecaprenyl-diphosphate synthase (geranylgeranyl-diphosphate specific) (304 aa).

The active site involves aspartate 33. Aspartate 33 is a binding site for Mg(2+). Substrate is bound by residues 34–37 (GNRR), lysine 46, histidine 50, and 78–80 (STE). Residue asparagine 81 is the Proton acceptor of the active site. Substrate contacts are provided by residues phenylalanine 82, arginine 84, arginine 203, and 209 to 211 (RTS).

The protein belongs to the UPP synthase family. In terms of assembly, homodimer. The cofactor is Mg(2+).

The catalysed reaction is geranylgeranyl diphosphate + 7 isopentenyl diphosphate = tri-trans,hepta-cis-undecaprenyl diphosphate + 7 diphosphate. Functionally, catalyzes the sequential condensation of isopentenyl diphosphate (IPP) with geranylgeranyl diphosphate (GGPP) to yield (2Z,6Z,10Z,14Z,18Z,22Z,26Z,30E,34E,38E)-undecaprenyl diphosphate (tritrans,heptacis-UPP). It is probably the precursor of glycosyl carrier lipids. This chain is Tritrans,polycis-undecaprenyl-diphosphate synthase (geranylgeranyl-diphosphate specific), found in Haloarcula marismortui (strain ATCC 43049 / DSM 3752 / JCM 8966 / VKM B-1809) (Halobacterium marismortui).